Consider the following 96-residue polypeptide: ATP-dependent Clp protease adapter protein ClpS (96 aa).

The protein belongs to the ClpS family. In terms of assembly, binds to the N-terminal domain of the chaperone ClpA.

In terms of biological role, involved in the modulation of the specificity of the ClpAP-mediated ATP-dependent protein degradation. The chain is ATP-dependent Clp protease adapter protein ClpS from Campylobacter jejuni subsp. jejuni serotype O:6 (strain 81116 / NCTC 11828).